Consider the following 1002-residue polypeptide: Collagen alpha-2(I) chain (1002 aa).

The segment at Ser-1–Ser-1002 is disordered. 4-hydroxyproline is present on residues Pro-10, Pro-13, Pro-28, and Pro-34. Positions Gly-17 to Pro-60 are enriched in low complexity. A 5-hydroxylysine; alternate modification is found at Lys-89. O-linked (Gal...) hydroxylysine; alternate glycosylation occurs at Lys-89. 2 stretches are compositionally biased toward low complexity: residues Ser-145–Pro-166 and Pro-211–Pro-232. Positions Gly-266–Gly-275 are enriched in gly residues. A compositionally biased stretch (low complexity) spans Ser-276–Ser-286. Gly residues predominate over residues Gly-308 to Gly-317. The segment covering Pro-330–Ser-346 has biased composition (low complexity). 4-hydroxyproline is present on residues Pro-352 and Pro-355. The segment covering Leu-381–Ala-400 has biased composition (low complexity). The segment covering Gly-449–Gly-458 has biased composition (gly residues). Composition is skewed to low complexity over residues Pro-505–Pro-522 and Glu-534–Ala-544. Gly residues predominate over residues Gly-545–Gly-554. 2 stretches are compositionally biased toward low complexity: residues Val-577 to Ser-621 and Val-628 to Ala-648. A compositionally biased stretch (basic and acidic residues) spans Lys-649 to Lys-658. Residues Pro-666–Ala-676 are compositionally biased toward low complexity. Residues Gly-686–Gly-695 are compositionally biased toward gly residues. Positions Thr-697–Thr-706 are enriched in low complexity. The span at Gly-743 to Gly-752 shows a compositional bias: gly residues. 2 stretches are compositionally biased toward low complexity: residues Ser-760–Pro-787 and Leu-795–Pro-805. A compositionally biased stretch (gly residues) spans Gly-806–Gly-828. Residues Ala-833 to Arg-851 show a composition bias toward basic and acidic residues. Residues Tyr-853 to Pro-898 show a composition bias toward low complexity. A compositionally biased stretch (basic and acidic residues) spans Arg-908–Pro-919. The span at Ser-987–Ser-1002 shows a compositional bias: pro residues.

The protein belongs to the fibrillar collagen family. In terms of assembly, trimers of one alpha 2(I) and two alpha 1(I) chains. Interacts (via C-terminus) with TMEM131 (via PapD-L domain); the interaction is direct and is involved in assembly and TRAPPIII ER-to-Golgi transport complex-dependent secretion of collagen. Post-translationally, prolines at the third position of the tripeptide repeating unit (G-X-Y) are hydroxylated in some or all of the chains. In terms of tissue distribution, expressed in bones.

Its subcellular location is the secreted. The protein localises to the extracellular space. It is found in the extracellular matrix. Type I collagen is a member of group I collagen (fibrillar forming collagen). The protein is Collagen alpha-2(I) chain of Glossotherium robustum (Ground sloth).